The sequence spans 65 residues: Gene 51 protein (65 aa).

This chain is Gene 51 protein (51), found in Mycobacterium phage D29 (Mycobacteriophage D29).